Consider the following 70-residue polypeptide: uncharacterized protein (70 aa).

2 consecutive transmembrane segments (helical) span residues Val19 to Leu39 and Leu40 to Phe60.

It localises to the cell membrane. This is an uncharacterized protein from Streptomyces coelicolor (strain ATCC BAA-471 / A3(2) / M145).